An 80-amino-acid polypeptide reads, in one-letter code: Large ribosomal subunit protein uL24 (80 aa).

It belongs to the universal ribosomal protein uL24 family. Part of the 50S ribosomal subunit.

Its function is as follows. One of two assembly initiator proteins, it binds directly to the 5'-end of the 23S rRNA, where it nucleates assembly of the 50S subunit. In terms of biological role, one of the proteins that surrounds the polypeptide exit tunnel on the outside of the subunit. In Prosthecochloris aestuarii (strain DSM 271 / SK 413), this protein is Large ribosomal subunit protein uL24.